The primary structure comprises 451 residues: Mannan endo-1,6-alpha-mannosidase DFG5 (451 aa).

The first 21 residues, methionine 1 to serine 21, serve as a signal peptide directing secretion. Residues asparagine 86, asparagine 111, asparagine 135, asparagine 203, asparagine 243, asparagine 268, and asparagine 402 are each glycosylated (N-linked (GlcNAc...) asparagine). Residue alanine 429 is the site of GPI-anchor amidated alanine attachment. Residues glycine 430–phenylalanine 451 constitute a propeptide, removed in mature form.

Belongs to the glycosyl hydrolase 76 family. In terms of processing, the GPI-anchor is attached to the protein in the endoplasmic reticulum and serves to target the protein to the cell surface. There, the glucosamine-inositol phospholipid moiety is cleaved off and the GPI-modified mannoprotein is covalently attached via its lipidless GPI glycan remnant to the 1,6-beta-glucan of the outer cell wall layer. Post-translationally, N-mannosylated.

It is found in the secreted. It localises to the cell wall. The protein resides in the cell membrane. The catalysed reaction is Random hydrolysis of (1-&gt;6)-alpha-D-mannosidic linkages in unbranched (1-&gt;6)-mannans.. In terms of biological role, required for normal synthesis of the cell wall and alkaline pH-induced hypha formation. In Candida albicans (strain SC5314 / ATCC MYA-2876) (Yeast), this protein is Mannan endo-1,6-alpha-mannosidase DFG5 (DFG5).